Here is a 1023-residue protein sequence, read N- to C-terminus: Exportin-T (1023 aa).

This sequence belongs to the exportin family.

The protein localises to the nucleus. It localises to the cytoplasm. In terms of biological role, tRNA nucleus export receptor which facilitates tRNA translocation across the nuclear pore complex. Involved in pre-tRNA splicing, probably by affecting the interaction of pre-tRNA with splicing endonuclease. The sequence is that of Exportin-T (los1) from Sclerotinia sclerotiorum (strain ATCC 18683 / 1980 / Ss-1) (White mold).